A 214-amino-acid polypeptide reads, in one-letter code: Probable chemoreceptor glutamine deamidase CheD (214 aa).

This sequence belongs to the CheD family.

The catalysed reaction is L-glutaminyl-[protein] + H2O = L-glutamyl-[protein] + NH4(+). Functionally, probably deamidates glutamine residues to glutamate on methyl-accepting chemotaxis receptors (MCPs), playing an important role in chemotaxis. In Vibrio vulnificus (strain YJ016), this protein is Probable chemoreceptor glutamine deamidase CheD.